Consider the following 689-residue polypeptide: Glycine--tRNA ligase beta subunit (689 aa).

This sequence belongs to the class-II aminoacyl-tRNA synthetase family. In terms of assembly, tetramer of two alpha and two beta subunits.

The protein localises to the cytoplasm. The catalysed reaction is tRNA(Gly) + glycine + ATP = glycyl-tRNA(Gly) + AMP + diphosphate. The sequence is that of Glycine--tRNA ligase beta subunit from Shewanella amazonensis (strain ATCC BAA-1098 / SB2B).